Reading from the N-terminus, the 315-residue chain is Homoserine kinase (315 aa).

ATP is bound at residue 97 to 107 (PPARGLGSSAT).

It belongs to the GHMP kinase family. Homoserine kinase subfamily.

The protein localises to the cytoplasm. The enzyme catalyses L-homoserine + ATP = O-phospho-L-homoserine + ADP + H(+). The protein operates within amino-acid biosynthesis; L-threonine biosynthesis; L-threonine from L-aspartate: step 4/5. Its function is as follows. Catalyzes the ATP-dependent phosphorylation of L-homoserine to L-homoserine phosphate. This chain is Homoserine kinase, found in Parasynechococcus marenigrum (strain WH8102).